Here is a 257-residue protein sequence, read N- to C-terminus: Ubiquinone biosynthesis O-methyltransferase (257 aa).

The S-adenosyl-L-methionine site is built by Arg-43, Gly-77, Asp-98, and Met-144.

The protein belongs to the methyltransferase superfamily. UbiG/COQ3 family.

The enzyme catalyses a 3-demethylubiquinol + S-adenosyl-L-methionine = a ubiquinol + S-adenosyl-L-homocysteine + H(+). The catalysed reaction is a 3-(all-trans-polyprenyl)benzene-1,2-diol + S-adenosyl-L-methionine = a 2-methoxy-6-(all-trans-polyprenyl)phenol + S-adenosyl-L-homocysteine + H(+). It participates in cofactor biosynthesis; ubiquinone biosynthesis. O-methyltransferase that catalyzes the 2 O-methylation steps in the ubiquinone biosynthetic pathway. The sequence is that of Ubiquinone biosynthesis O-methyltransferase from Psychrobacter cryohalolentis (strain ATCC BAA-1226 / DSM 17306 / VKM B-2378 / K5).